The following is a 32-amino-acid chain: Phospholipase A2 (32 aa).

Residues Tyr-16, Gly-18, and Gly-20 each contribute to the Ca(2+) site.

Ca(2+) is required as a cofactor. As to expression, expressed by the venom gland.

It localises to the secreted. It carries out the reaction a 1,2-diacyl-sn-glycero-3-phosphocholine + H2O = a 1-acyl-sn-glycero-3-phosphocholine + a fatty acid + H(+). In terms of biological role, PLA2 catalyzes the calcium-dependent hydrolysis of the 2-acyl groups in 3-sn-phosphoglycerides. The polypeptide is Phospholipase A2 (Micrurus lemniscatus (South American coral snake)).